Reading from the N-terminus, the 166-residue chain is 3-hydroxyacyl-[acyl-carrier-protein] dehydratase FabZ (166 aa).

Residue H72 is part of the active site.

It belongs to the thioester dehydratase family. FabZ subfamily.

It is found in the cytoplasm. The catalysed reaction is a (3R)-hydroxyacyl-[ACP] = a (2E)-enoyl-[ACP] + H2O. Involved in unsaturated fatty acids biosynthesis. Catalyzes the dehydration of short chain beta-hydroxyacyl-ACPs and long chain saturated and unsaturated beta-hydroxyacyl-ACPs. This Synechococcus sp. (strain JA-3-3Ab) (Cyanobacteria bacterium Yellowstone A-Prime) protein is 3-hydroxyacyl-[acyl-carrier-protein] dehydratase FabZ.